The chain runs to 151 residues: Deoxyuridine 5'-triphosphate nucleotidohydrolase (151 aa).

Residues 70-72, Asn-83, 87-89, and Met-97 contribute to the substrate site; these read RSG and LID.

This sequence belongs to the dUTPase family. Mg(2+) is required as a cofactor.

The enzyme catalyses dUTP + H2O = dUMP + diphosphate + H(+). It participates in pyrimidine metabolism; dUMP biosynthesis; dUMP from dCTP (dUTP route): step 2/2. Functionally, this enzyme is involved in nucleotide metabolism: it produces dUMP, the immediate precursor of thymidine nucleotides and it decreases the intracellular concentration of dUTP so that uracil cannot be incorporated into DNA. The sequence is that of Deoxyuridine 5'-triphosphate nucleotidohydrolase from Pasteurella multocida (strain Pm70).